The following is a 136-amino-acid chain: MGIKDIDIKENFGKIVQNMDLKFRKIDDKELLIAIAIDKYKNVLMTAFMDKESLKMTLKTGLMHYFSTSRNKIWMKGEESKNVQKVLEVFKDCDGDALLFIVEQTGWACHEGYMSCFHNKVDLNTGNSTVIGDKLD.

Asp92 is a binding site for Mg(2+). Residue Cys93 participates in Zn(2+) binding. Residues Asp94 and Asp96 each coordinate Mg(2+). 2 residues coordinate Zn(2+): Cys109 and Cys116.

The protein belongs to the PRA-CH family. As to quaternary structure, homodimer. It depends on Mg(2+) as a cofactor. The cofactor is Zn(2+).

The protein localises to the cytoplasm. It carries out the reaction 1-(5-phospho-beta-D-ribosyl)-5'-AMP + H2O = 1-(5-phospho-beta-D-ribosyl)-5-[(5-phospho-beta-D-ribosylamino)methylideneamino]imidazole-4-carboxamide. Its pathway is amino-acid biosynthesis; L-histidine biosynthesis; L-histidine from 5-phospho-alpha-D-ribose 1-diphosphate: step 3/9. Reversibly inhibited by EDTA and free zinc ions. Enzyme is inactivated by dialysis against 1,10-phenanthroline, which is a zinc specific chelator. Its function is as follows. Catalyzes the hydrolysis of the adenine ring of phosphoribosyl-AMP. The sequence is that of Phosphoribosyl-AMP cyclohydrolase from Methanococcus vannielii.